Here is a 492-residue protein sequence, read N- to C-terminus: DEAD-box ATP-dependent RNA helicase RhpA (492 aa).

The Q motif motif lies at 20–48 (PSFNDLGLKESVLKSVYEAGFTSPSPIQE). Residues 51–220 (IPAVLQGRDV…DKILENPIKI (170 aa)) form the Helicase ATP-binding domain. 64 to 71 (AQTGTGKT) lines the ATP pocket. The DEAD box signature appears at 168–171 (DESD). Residues 231-393 (DITQRFYVIN…EIPTINENQI (163 aa)) form the Helicase C-terminal domain. The interval 445-492 (AIQNPKEKTPKPSNKKTPQHERARSFKKGQHRDRHPKTNHYSKKPKRR) is disordered. Residues 469–492 (SFKKGQHRDRHPKTNHYSKKPKRR) show a composition bias toward basic residues.

It belongs to the DEAD box helicase family. As to quaternary structure, homodimer. Interacts with RNase J (rnj), might be a member of a minimal RNA degradosome complex.

It localises to the cytoplasm. The catalysed reaction is ATP + H2O = ADP + phosphate + H(+). Its function is as follows. DEAD-box RNA helicase probably involved in RNA degradation. Unwinds dsRNA in both 5'- and 3'-directions. The protein is DEAD-box ATP-dependent RNA helicase RhpA (rhpA) of Helicobacter pylori (strain ATCC 700392 / 26695) (Campylobacter pylori).